The following is an 805-amino-acid chain: Endonuclease MutS2 (805 aa).

Residue 344–351 (GPNGGGKT) participates in ATP binding. The tract at residues 705–724 (RSRSEKLQAASEARPSAPPG) is disordered. A Smr domain is found at 729 to 804 (LDVRGLRVEE…GDAVTVVSLR (76 aa)).

This sequence belongs to the DNA mismatch repair MutS family. MutS2 subfamily. Homodimer. Binds to stalled ribosomes, contacting rRNA.

Its function is as follows. Endonuclease that is involved in the suppression of homologous recombination and thus may have a key role in the control of bacterial genetic diversity. In terms of biological role, acts as a ribosome collision sensor, splitting the ribosome into its 2 subunits. Detects stalled/collided 70S ribosomes which it binds and splits by an ATP-hydrolysis driven conformational change. Acts upstream of the ribosome quality control system (RQC), a ribosome-associated complex that mediates the extraction of incompletely synthesized nascent chains from stalled ribosomes and their subsequent degradation. Probably generates substrates for RQC. The polypeptide is Endonuclease MutS2 (Anaeromyxobacter sp. (strain Fw109-5)).